The primary structure comprises 153 residues: MEAPAITHSSGCVCSDCQWSGSPTVDTKVYLGSGTHANTTKTRETSFLSVLNDNAWLFVIAALILCLYFIISKPHVDAVYTEFHQDLNGFSMKLAPGVPIDPKVIAAVKNWQKYPFGTDPRENMVTSIVSGLRHSFCILLLVVVLLVYVCHKP.

Over 1 to 50 (MEAPAITHSSGCVCSDCQWSGSPTVDTKVYLGSGTHANTTKTRETSFLSV) the chain is Cytoplasmic. A helical membrane pass occupies residues 51-71 (LNDNAWLFVIAALILCLYFII). Topologically, residues 72–127 (SKPHVDAVYTEFHQDLNGFSMKLAPGVPIDPKVIAAVKNWQKYPFGTDPRENMVTS) are lumenal. A helical transmembrane segment spans residues 128–148 (IVSGLRHSFCILLLVVVLLVY). Over 149–153 (VCHKP) the chain is Cytoplasmic.

The protein belongs to the virgaviridae TGB3 movement protein family. Interacts with movement proteins TGB1 and TGB2. TGB1-TGB3-TGB2 complex formation is enhanced by ATP hydrolysis.

Its subcellular location is the host cell junction. The protein resides in the host plasmodesma. The protein localises to the host endoplasmic reticulum membrane. It is found in the host cytoplasm. It localises to the host cytoskeleton. Participates in the transport of viral genome to neighboring plant cells directly through plasmodesmata, without any budding. TGBp2 and TGBp3 are necessary for intracellular delivery of TGBp1-containing vRNPs to plasmodesmata. Can gate plasmodesmata and increase their size exclusion limit. Induces host actin cytoskeleton network thickening, which probably plays a major role in virus cell-to-cell movement. This chain is Movement protein TGB3, found in Arachis hypogaea (Peanut).